The primary structure comprises 170 residues: Glycine cleavage system H protein, mitochondrial (170 aa).

A mitochondrion-targeting transit peptide spans 1-47 (MLRTTRLWTTRMPTVSKLFLRNSSGNALNKNKLPFLYSSQGPQAVRY). The 83-residue stretch at 61–143 (TAFVGITKYA…MGDGWLVKMK (83 aa)) folds into the Lipoyl-binding domain. Position 102 is an N6-lipoyllysine (lysine 102).

It belongs to the GcvH family. Component of the glycine decarboxylase complex (GDC), which is composed of four proteins: P, T, L and H. Requires (R)-lipoate as cofactor.

The protein localises to the mitochondrion. Functionally, the glycine cleavage system (glycine decarboxylase complex) catalyzes the degradation of glycine. The H protein shuttles the methylamine group of glycine from the P protein to the T protein. This chain is Glycine cleavage system H protein, mitochondrial (GCV3), found in Saccharomyces cerevisiae (strain ATCC 204508 / S288c) (Baker's yeast).